The primary structure comprises 145 residues: HTH-type transcriptional regulator MhqR (145 aa).

In terms of domain architecture, HTH marR-type spans 5-137 (SLKLFIVLSR…CTEMLKRVGL (133 aa)). The segment at residues 51 to 74 (LQQIGDKILLASGSITYVVDKLEQ) is a DNA-binding region (H-T-H motif).

Negatively regulates mhqA, mhqED, mhqNOP, and azoR2 which may contribute to the degradation of aromatic compounds. This is HTH-type transcriptional regulator MhqR (mhqR) from Bacillus subtilis (strain 168).